Consider the following 229-residue polypeptide: UPF0758 protein Cbei_0490 (229 aa).

In terms of domain architecture, MPN spans 107–229; the sequence is KITSPKDLAS…FVSLKERGLI (123 aa). Zn(2+) contacts are provided by His178, His180, and Asp191. The JAMM motif signature appears at 178–191; sequence HNHPSGDPTPSRED.

It belongs to the UPF0758 family.

The chain is UPF0758 protein Cbei_0490 from Clostridium beijerinckii (strain ATCC 51743 / NCIMB 8052) (Clostridium acetobutylicum).